The following is a 102-amino-acid chain: Large ribosomal subunit protein bL21 (102 aa).

It belongs to the bacterial ribosomal protein bL21 family. Part of the 50S ribosomal subunit. Contacts protein L20.

Its function is as follows. This protein binds to 23S rRNA in the presence of protein L20. In Ligilactobacillus salivarius (strain UCC118) (Lactobacillus salivarius), this protein is Large ribosomal subunit protein bL21.